Consider the following 450-residue polypeptide: GTPase HflX (450 aa).

2 disordered regions span residues Thr-79 to Ala-110 and Arg-173 to Leu-196. Over residues Ser-178–Ala-189 the composition is skewed to gly residues. The 166-residue stretch at Leu-230 to Met-395 folds into the Hflx-type G domain. Residues Gly-236 to Ser-243, Phe-261 to Asp-265, Asp-283 to Gly-286, Asn-349 to Asp-352, and Ser-373 to His-375 each bind GTP. The Mg(2+) site is built by Ser-243 and Thr-263.

The protein belongs to the TRAFAC class OBG-HflX-like GTPase superfamily. HflX GTPase family. In terms of assembly, monomer. Associates with the 50S ribosomal subunit. The cofactor is Mg(2+).

Its subcellular location is the cytoplasm. GTPase that associates with the 50S ribosomal subunit and may have a role during protein synthesis or ribosome biogenesis. This is GTPase HflX from Gluconacetobacter diazotrophicus (strain ATCC 49037 / DSM 5601 / CCUG 37298 / CIP 103539 / LMG 7603 / PAl5).